The following is a 368-amino-acid chain: MSETAKKVIVGMSGGVDSSVSAWLLQQQGYQVEGLFMKNWEEDDGEEYCTAAADLADAQAVCDKLGIELHTVNFAAEYWDNVFELFLAEYKAGRTPNPDILCNKEIKFKAFLEFAAEDLGADYIATGHYVRRADVDGKSRLLRGLDSNKDQSYFLYTLSHEQIAQSLFPVGELEKPQVRKIAEDLGLVTAKKKDSTGICFIGERKFREFLGRYLPAQPGKIITVDGDEIGEHQGLMYHTLGQRKGLGIGGTKEGTEEPWYVVDKDVENNILVVAQGHEHPRLMSVGLIAQQLHWVDREPFTGTMRCTVKTRYRQTDIPCTVKALDDDRIKVIFDEPVAAVTPGQSAVFYNGEVCLGGGIIEQRLPLPV.

Residues 11–18 (GMSGGVDS) and methionine 37 each bind ATP. Residues 97–99 (NPD) are interaction with target base in tRNA. Cysteine 102 functions as the Nucleophile in the catalytic mechanism. Residues cysteine 102 and cysteine 199 are joined by a disulfide bond. Glycine 127 contributes to the ATP binding site. The interaction with tRNA stretch occupies residues 149 to 151 (KDQ). Catalysis depends on cysteine 199, which acts as the Cysteine persulfide intermediate. The interaction with tRNA stretch occupies residues 311 to 312 (RY).

It belongs to the MnmA/TRMU family. In terms of assembly, interacts with TusE.

Its subcellular location is the cytoplasm. The enzyme catalyses S-sulfanyl-L-cysteinyl-[protein] + uridine(34) in tRNA + AH2 + ATP = 2-thiouridine(34) in tRNA + L-cysteinyl-[protein] + A + AMP + diphosphate + H(+). In terms of biological role, catalyzes the 2-thiolation of uridine at the wobble position (U34) of tRNA(Lys), tRNA(Glu) and tRNA(Gln), leading to the formation of s(2)U34, the first step of tRNA-mnm(5)s(2)U34 synthesis. Sulfur is provided by IscS, via a sulfur-relay system. Binds ATP and its substrate tRNAs. The chain is tRNA-specific 2-thiouridylase MnmA from Shigella flexneri serotype 5b (strain 8401).